Here is a 452-residue protein sequence, read N- to C-terminus: Glutamyl-tRNA(Gln) amidotransferase subunit A (452 aa).

Active-site charge relay system residues include Lys-56 and Ser-131. Ser-155 (acyl-ester intermediate) is an active-site residue.

This sequence belongs to the amidase family. GatA subfamily. As to quaternary structure, heterotrimer of A, B and C subunits.

It catalyses the reaction L-glutamyl-tRNA(Gln) + L-glutamine + ATP + H2O = L-glutaminyl-tRNA(Gln) + L-glutamate + ADP + phosphate + H(+). Functionally, allows the formation of correctly charged Gln-tRNA(Gln) through the transamidation of misacylated Glu-tRNA(Gln) in organisms which lack glutaminyl-tRNA synthetase. The reaction takes place in the presence of glutamine and ATP through an activated gamma-phospho-Glu-tRNA(Gln). The polypeptide is Glutamyl-tRNA(Gln) amidotransferase subunit A (Campylobacter concisus (strain 13826)).